Reading from the N-terminus, the 832-residue chain is Protein PPP4R3C (832 aa).

A disordered region spans residues 708 to 832; sequence RTQEGEAVMP…SPKKKPHLSS (125 aa). Composition is skewed to basic and acidic residues over residues 725 to 735 and 749 to 765; these read FTETKRTHQEG and METK…DSPK. Positions 769–779 are enriched in low complexity; it reads SGDFKFSSSYS. The span at 801 to 820 shows a compositional bias: acidic residues; the sequence is PDDEEEKEEDEEEKEEDKED.

Belongs to the SMEK family.

This Homo sapiens (Human) protein is Protein PPP4R3C.